We begin with the raw amino-acid sequence, 583 residues long: Protein disulfide-isomerase-like protein of the testis (583 aa).

The signal sequence occupies residues 1-17 (MDLLWMPLLLVAARISA). N-linked (GlcNAc...) asparagine glycans are attached at residues Asn-58, Asn-128, Asn-160, and Asn-340. Residues 388–451 (LVKQLVGKNF…IAKIDITAND (64 aa)) enclose the Thioredoxin domain. Basic and acidic residues-rich tracts occupy residues 522–531 (EVPMMKKELP) and 540–559 (NVTKHVSKLEESAGKKKTSE). The interval 522–583 (EVPMMKKELP…KKKPKVKEEL (62 aa)) is disordered. N-linked (GlcNAc...) asparagine glycosylation is present at Asn-540. Positions 573–583 (QKKKPKVKEEL) are enriched in basic residues. Residues 580-583 (KEEL) carry the Prevents secretion from ER motif.

This sequence belongs to the protein disulfide isomerase family. In terms of assembly, homodimer. The homodimer is not disulfide-linked. Interacts with ERO1A and CLGN. In terms of processing, N-glycosylated.

It localises to the endoplasmic reticulum. In terms of biological role, probable redox-inactive chaperone involved in spermatogenesis. The sequence is that of Protein disulfide-isomerase-like protein of the testis (PDILT) from Macaca fascicularis (Crab-eating macaque).